A 249-amino-acid polypeptide reads, in one-letter code: MIIAKQYRCIHSATCHCTKGHLSEEVLFLMVQHLNWNPNVIATLSCVCKWFDDLAKRLLWKEFCRARAPKMMSDLQSSGSHSVDGSWRALGKLLIYCSGSSKGGLFNDVQISGHFVHRTRFSRTSGRSFLPPQCRTDDILYVSDPCEHLDQGEDGDLGFFRGIFKSFSMSKVRKLLIKKGTPFHPTEVCPYCKAKLWSMLQAKMIPQSASCRLGAYEDSIEYYVCLNGHMLGVCTLLPLSDSEGASEFQ.

The region spanning 16-68 is the F-box domain; the sequence is HCTKGHLSEEVLFLMVQHLNWNPNVIATLSCVCKWFDDLAKRLLWKEFCRARA.

The sequence is that of EID1-like F-box protein 2 (EDL2) from Arabidopsis thaliana (Mouse-ear cress).